A 177-amino-acid polypeptide reads, in one-letter code: Endoribonuclease YbeY (177 aa).

Residues histidine 118, histidine 122, and histidine 128 each contribute to the Zn(2+) site.

This sequence belongs to the endoribonuclease YbeY family. The cofactor is Zn(2+).

It is found in the cytoplasm. In terms of biological role, single strand-specific metallo-endoribonuclease involved in late-stage 70S ribosome quality control and in maturation of the 3' terminus of the 16S rRNA. The polypeptide is Endoribonuclease YbeY (Mycobacterium sp. (strain JLS)).